A 651-amino-acid polypeptide reads, in one-letter code: p-hydroxybenzoic acid efflux pump subunit AaeB (651 aa).

The next 11 helical transmembrane spans lie at 11–31 (FAFK…HLQL), 41–61 (AAIV…SGAI), 67–87 (LRII…VLTI), 91–111 (VLTL…SSLV), 119–139 (FGLA…TPLL), 150–170 (EIVL…PRSI), 368–388 (LFWL…IAVV), 405–425 (FLVG…FIIP), 429–449 (QSML…GIEV), 455–475 (GSLG…PMIF), and 481–501 (LDSA…LLLI).

Belongs to the aromatic acid exporter ArAE (TC 2.A.85) family.

It is found in the cell inner membrane. Functionally, forms an efflux pump with AaeA. Could function as a metabolic relief valve, allowing to eliminate certain compounds when they accumulate to high levels in the cell. The sequence is that of p-hydroxybenzoic acid efflux pump subunit AaeB from Yersinia pseudotuberculosis serotype O:1b (strain IP 31758).